A 304-amino-acid chain; its full sequence is D-alanine--D-alanine ligase (304 aa).

In terms of domain architecture, ATP-grasp spans 103-299; sequence KLIWQALGLP…FADLCIEILK (197 aa). ATP is bound at residue 129-184; sequence EEKLGLPMFVKPAAEGSSVGVVKVKEKGRLKSVYEELKHLQGEIIAERFIGGGEYS. Mg(2+) contacts are provided by Asp-253, Glu-266, and Asn-268.

The protein belongs to the D-alanine--D-alanine ligase family. Mg(2+) serves as cofactor. It depends on Mn(2+) as a cofactor.

The protein localises to the cytoplasm. It catalyses the reaction 2 D-alanine + ATP = D-alanyl-D-alanine + ADP + phosphate + H(+). The protein operates within cell wall biogenesis; peptidoglycan biosynthesis. Its function is as follows. Cell wall formation. This is D-alanine--D-alanine ligase from Neisseria gonorrhoeae (strain ATCC 700825 / FA 1090).